The following is a 355-amino-acid chain: MSLCTVEINLSTIKNNYLLLQDVCKTSLVGAAVKANGYGLGAVQISKALIEENCRHFFVASSEEGVNLRNALGLDVNILVLNGVFEHDALELIEYNLTPVLNNLKQIEIWQKFSNLKNRLLPCYLHFNTGINRLGLSSDEIEQLINDRDLLKGLDLQYIISHLAISEEIDNPYNLEQLNRFKAYLQYFPNVKASLANSGGIFLGQDYHFDLARPGAALYGLNPLTKNPVTLKAPIIHLQNLTLDSHIGYNMTFTTKRDSVIATLPLGYADGFSRNFSNQGEVFINSRSVPIVGRVSMDLINIDVTDLPPSEIFLGQEAEIIGNYCTPDKIASIIGTIGYEVLTNLGSRYKRKYIG.

Lys34 acts as the Proton acceptor; specific for D-alanine in catalysis. An N6-(pyridoxal phosphate)lysine modification is found at Lys34. Residue Arg133 participates in substrate binding. Tyr249 acts as the Proton acceptor; specific for L-alanine in catalysis. Substrate is bound at residue Met297.

The protein belongs to the alanine racemase family. Pyridoxal 5'-phosphate is required as a cofactor.

The catalysed reaction is L-alanine = D-alanine. It functions in the pathway amino-acid biosynthesis; D-alanine biosynthesis; D-alanine from L-alanine: step 1/1. Functionally, catalyzes the interconversion of L-alanine and D-alanine. May also act on other amino acids. This chain is Alanine racemase (alr), found in Rickettsia peacockii (strain Rustic).